Here is a 269-residue protein sequence, read N- to C-terminus: Hemin import ATP-binding protein HmuV (269 aa).

The region spanning 5–242 is the ABC transporter domain; it reads LDAEAASFAI…SLIRRVFDIA (238 aa). ATP is bound at residue 37–44; the sequence is GPNGAGKS.

This sequence belongs to the ABC transporter superfamily. Heme (hemin) importer (TC 3.A.1.14.5) family. In terms of assembly, the complex is composed of two ATP-binding proteins (HmuV), two transmembrane proteins (HmuU) and a solute-binding protein (HmuT).

Its subcellular location is the cell inner membrane. Its function is as follows. Part of the ABC transporter complex HmuTUV involved in hemin import. Responsible for energy coupling to the transport system. The protein is Hemin import ATP-binding protein HmuV of Rhodopseudomonas palustris (strain BisB18).